The chain runs to 132 residues: MKKALFLVGLVFTAGVISSCGGVSSQRTYEGAAVGAAVGAAAGVLLDKENRWRGGVIGAALGAILGGTITEIAQRAAKEAAQNNKPVVYRAEDGSQMVRAEPVEKRGNCTLVKTKYYQNGKLVKVEEKEVCE.

The signal sequence occupies residues 1-19 (MKKALFLVGLVFTAGVISS). A lipid anchor (N-palmitoyl cysteine) is attached at C20. C20 carries S-diacylglycerol cysteine lipidation.

The protein resides in the cell membrane. This is an uncharacterized protein from Aquifex aeolicus (strain VF5).